Reading from the N-terminus, the 175-residue chain is MLDLGLTKMALIGVVALVVLGPERLPRVARTAGALFGRAQRYINDVKAEVTREIELDELRRMKSEFEAAATNVETSVQDNLRKHESELNDAWNSGTSVSPSIAGGALEDVGNAGNTSWPGSTPAAGAKRKNWRVRQTAMPTWYKRATTRRTRVQSGAARVARHTPATMRRPTRFF.

Residues 1–21 form a helical membrane-spanning segment; that stretch reads MLDLGLTKMALIGVVALVVLG. Disordered regions lie at residues 104-132 and 155-175; these read GGAL…RKNW and SGAA…TRFF.

It belongs to the TatB family. The Tat system comprises two distinct complexes: a TatABC complex, containing multiple copies of TatA, TatB and TatC subunits, and a separate TatA complex, containing only TatA subunits. Substrates initially bind to the TatABC complex, which probably triggers association of the separate TatA complex to form the active translocon.

Its subcellular location is the cell inner membrane. Its function is as follows. Part of the twin-arginine translocation (Tat) system that transports large folded proteins containing a characteristic twin-arginine motif in their signal peptide across membranes. Together with TatC, TatB is part of a receptor directly interacting with Tat signal peptides. TatB may form an oligomeric binding site that transiently accommodates folded Tat precursor proteins before their translocation. In Paraburkholderia xenovorans (strain LB400), this protein is Sec-independent protein translocase protein TatB.